The primary structure comprises 622 residues: Chaperone protein HscA homolog (622 aa).

The protein belongs to the heat shock protein 70 family.

Its function is as follows. Chaperone involved in the maturation of iron-sulfur cluster-containing proteins. Has a low intrinsic ATPase activity which is markedly stimulated by HscB. In Burkholderia multivorans (strain ATCC 17616 / 249), this protein is Chaperone protein HscA homolog.